Consider the following 206-residue polypeptide: Probable N-acetyltransferase 14 (206 aa).

The region spanning 6–206 (LSVREMREDE…TLVREFSKDL (201 aa)) is the N-acetyltransferase domain. The helical transmembrane segment at 57 to 77 (FVLASFALALLLPVFLAVAAV) threads the bilayer.

Belongs to the camello family. As to expression, expressed in K-562 and HeLa cell lines and in brain.

The protein localises to the membrane. Functionally, probable acetyltransferase. Its function is as follows. May act as a transcription factor that regulates the expression of coproporphyrinogen oxidase by binding to a promoter regulatory element. This is Probable N-acetyltransferase 14 (NAT14) from Homo sapiens (Human).